We begin with the raw amino-acid sequence, 94 residues long: MPKKDIHPNWYPDAKVICNGEVVMTTGSTQPEIHVDVWSGNHPFFTGTQKILDTEGRVDRFMRKYGMANPDEDSTKNTKSSKKETSEDSSSKGS.

The segment at 64–94 (KYGMANPDEDSTKNTKSSKKETSEDSSSKGS) is disordered. Basic and acidic residues predominate over residues 73–94 (DSTKNTKSSKKETSEDSSSKGS).

The protein belongs to the bacterial ribosomal protein bL31 family. Type A subfamily. In terms of assembly, part of the 50S ribosomal subunit.

Binds the 23S rRNA. The polypeptide is Large ribosomal subunit protein bL31 (Prochlorococcus marinus (strain SARG / CCMP1375 / SS120)).